A 254-amino-acid chain; its full sequence is MFVDLNSDLGESFGSWKMGNDDQILPVVTSANIACGFHAGDPLGILKTVRKAVELGVTIGAHVSYPDLVGFGRRNMDLSRDELIADVLYQISALDGLAKVAGSKVQYVKPHGALYNTIAYDQVQAAAVIDAIKMYNPELVLVALAGSNLVEQARAAGLKVVSEAFADRAYNSDGSLVSRRLEGAVLHDSAFVASRVVSMLKNGGVESIDGVFTPIQADTICLHGDTDGALEMSAAIKAELVKNNIEIRPFVNKA.

This sequence belongs to the LamB/PxpA family. Forms a complex composed of PxpA, PxpB and PxpC.

It carries out the reaction 5-oxo-L-proline + ATP + 2 H2O = L-glutamate + ADP + phosphate + H(+). Functionally, catalyzes the cleavage of 5-oxoproline to form L-glutamate coupled to the hydrolysis of ATP to ADP and inorganic phosphate. This chain is 5-oxoprolinase subunit A, found in Acinetobacter baumannii (strain AB307-0294).